We begin with the raw amino-acid sequence, 413 residues long: Zinc finger CCCH domain-containing protein 6 (413 aa).

Disordered regions lie at residues 28-61 (PSQVGSESQDHLQAKSPLASHPSDDNLPPGFGGP), 159-191 (DSASDFPTQSGVDVGTEPSITDENTSTSSTLPA), and 333-356 (QPGGGPNPEMVNSSNNNQRPRDSK). Residues 176 to 189 (PSITDENTSTSSTL) show a composition bias toward polar residues. A C3H1-type zinc finger spans residues 357–385 (PKIMKACMYFNSARGCRHGANCMYQHDAT). Positions 389–403 (PRNLNNGNINTSDMQ) are enriched in polar residues. Positions 389–413 (PRNLNNGNINTSDMQNAKRMRFDRD) are disordered.

The sequence is that of Zinc finger CCCH domain-containing protein 6 from Arabidopsis thaliana (Mouse-ear cress).